The following is a 518-amino-acid chain: MAASIVRRLGPLVAGRGLRLRGGCVCNQSFKRSFATERQDRNLLYEHAREGYSALPLLDMESLCAYPEDAARALDLRKGELRSKDLPGIISTWQELRQLREQIRSLEEEKEAVTEAVRALVVNQDNSQVQQDPQYQSLRARGREIRKQLTLLYPKEAQLEEQFYLRALRLPNQTHPDVPVGDESQARVLHVVGDKPAFSFQPRGHLEIAEKLDIIRQKRLSHVSGHRSYYLRGAGALLQHGLVNFTLNKLIHRGFTPMTVPDLLRGVVFEGCGMTPNAKPSQIYNIDPSRFEDLNLAGTAEVGLAGYFMDHSVAFRDLPIRMVCSSTCYRAETDTGKEPWGLYRVHHFTKVEMFGVTGPGLEQSSELLEEFLSLQMEILTELGLHFRVLDMPTQELGLPAYRKFDIEAWMPGRGRFGEVTSASNCTDFQSRRLHIMFQTEAGELQFAHTVNATGCAVPRLLIALLESYQQKDGSVLVPPALQPYLGTDRITTPTHVPLQYIGPNQPQKPRLPGQPASS.

The N-terminal 34 residues, 1–34 (MAASIVRRLGPLVAGRGLRLRGGCVCNQSFKRSF), are a transit peptide targeting the mitochondrion. An N6-acetyllysine modification is found at K110. The residue at position 195 (K195) is an N6-succinyllysine. Residue 299-301 (TAE) coordinates L-serine. ATP is bound at residue 330 to 332 (RAE). K337 is subject to N6-succinyllysine. V345 provides a ligand contact to ATP. Residue E352 coordinates L-serine. 418-421 (EVTS) contributes to the ATP binding site. T453 contributes to the L-serine binding site. The interval 497–518 (PLQYIGPNQPQKPRLPGQPASS) is disordered.

It belongs to the class-II aminoacyl-tRNA synthetase family. Type-1 seryl-tRNA synthetase subfamily. Homodimer. The tRNA molecule probably binds across the dimer. In terms of processing, two N-termini starting at positions 35 and 37 have been identified by direct sequencing.

It is found in the mitochondrion matrix. It catalyses the reaction tRNA(Ser) + L-serine + ATP = L-seryl-tRNA(Ser) + AMP + diphosphate + H(+). The enzyme catalyses tRNA(Sec) + L-serine + ATP = L-seryl-tRNA(Sec) + AMP + diphosphate + H(+). It functions in the pathway aminoacyl-tRNA biosynthesis; selenocysteinyl-tRNA(Sec) biosynthesis; L-seryl-tRNA(Sec) from L-serine and tRNA(Sec): step 1/1. Its function is as follows. Catalyzes the attachment of serine to tRNA(Ser). Is also probably able to aminoacylate tRNA(Sec) with serine, to form the misacylated tRNA L-seryl-tRNA(Sec), which will be further converted into selenocysteinyl-tRNA(Sec). The polypeptide is Serine--tRNA ligase, mitochondrial (SARS2) (Bos taurus (Bovine)).